The sequence spans 345 residues: Myb/SANT-like DNA-binding domain-containing protein 4 (345 aa).

Residues 4–77 form the Myb-like domain; sequence LKRKRKSNFS…EVKRRYLDWR (74 aa). Lys9 participates in a covalent cross-link: Glycyl lysine isopeptide (Lys-Gly) (interchain with G-Cter in SUMO2). The residue at position 106 (Ser106) is a Phosphoserine. Residues Lys114 and Lys142 each participate in a glycyl lysine isopeptide (Lys-Gly) (interchain with G-Cter in SUMO2) cross-link. The segment at 139–175 is disordered; the sequence is TEVKVEEEERDPQSPEFEIEEEEEMLSSVIPDSRREN. Thr188 is modified (phosphothreonine). Residues 202–344 are a coiled coil; sequence HLLMNIEKQK…RLRIQKEGHL (143 aa). Residues Lys237, Lys254, and Lys273 each participate in a glycyl lysine isopeptide (Lys-Gly) (interchain with G-Cter in SUMO2) cross-link.

The polypeptide is Myb/SANT-like DNA-binding domain-containing protein 4 (Msantd4) (Mus musculus (Mouse)).